A 194-amino-acid polypeptide reads, in one-letter code: dITP/XTP pyrophosphatase (194 aa).

8–13 (TSNPGK) is a substrate binding site. Positions 38 and 67 each coordinate Mg(2+). D67 (proton acceptor) is an active-site residue. Residues S68, 152-155 (FGYD), K175, and 180-181 (HR) contribute to the substrate site.

This sequence belongs to the HAM1 NTPase family. In terms of assembly, homodimer. It depends on Mg(2+) as a cofactor.

It carries out the reaction XTP + H2O = XMP + diphosphate + H(+). The catalysed reaction is dITP + H2O = dIMP + diphosphate + H(+). It catalyses the reaction ITP + H2O = IMP + diphosphate + H(+). In terms of biological role, pyrophosphatase that catalyzes the hydrolysis of nucleoside triphosphates to their monophosphate derivatives, with a high preference for the non-canonical purine nucleotides XTP (xanthosine triphosphate), dITP (deoxyinosine triphosphate) and ITP. Seems to function as a house-cleaning enzyme that removes non-canonical purine nucleotides from the nucleotide pool, thus preventing their incorporation into DNA/RNA and avoiding chromosomal lesions. The polypeptide is dITP/XTP pyrophosphatase (Legionella pneumophila (strain Lens)).